A 185-amino-acid chain; its full sequence is Ribosome-recycling factor (185 aa).

This sequence belongs to the RRF family.

It localises to the cytoplasm. Responsible for the release of ribosomes from messenger RNA at the termination of protein biosynthesis. May increase the efficiency of translation by recycling ribosomes from one round of translation to another. The protein is Ribosome-recycling factor of Wolbachia sp. subsp. Drosophila simulans (strain wRi).